Reading from the N-terminus, the 130-residue chain is Phosphoribosyl-AMP cyclohydrolase (130 aa).

Residue Asp-77 participates in Mg(2+) binding. Cys-78 contributes to the Zn(2+) binding site. Residues Asp-79 and Asp-81 each contribute to the Mg(2+) site. Residues Cys-95 and Cys-102 each coordinate Zn(2+).

This sequence belongs to the PRA-CH family. As to quaternary structure, homodimer. Mg(2+) is required as a cofactor. It depends on Zn(2+) as a cofactor.

It is found in the cytoplasm. The enzyme catalyses 1-(5-phospho-beta-D-ribosyl)-5'-AMP + H2O = 1-(5-phospho-beta-D-ribosyl)-5-[(5-phospho-beta-D-ribosylamino)methylideneamino]imidazole-4-carboxamide. The protein operates within amino-acid biosynthesis; L-histidine biosynthesis; L-histidine from 5-phospho-alpha-D-ribose 1-diphosphate: step 3/9. In terms of biological role, catalyzes the hydrolysis of the adenine ring of phosphoribosyl-AMP. The protein is Phosphoribosyl-AMP cyclohydrolase of Pseudomonas putida (strain W619).